Consider the following 461-residue polypeptide: UDP-N-acetylmuramoylalanine--D-glutamate ligase (461 aa).

115–121 (GSNGKTT) serves as a coordination point for ATP.

Belongs to the MurCDEF family.

The protein localises to the cytoplasm. It catalyses the reaction UDP-N-acetyl-alpha-D-muramoyl-L-alanine + D-glutamate + ATP = UDP-N-acetyl-alpha-D-muramoyl-L-alanyl-D-glutamate + ADP + phosphate + H(+). Its pathway is cell wall biogenesis; peptidoglycan biosynthesis. Functionally, cell wall formation. Catalyzes the addition of glutamate to the nucleotide precursor UDP-N-acetylmuramoyl-L-alanine (UMA). This is UDP-N-acetylmuramoylalanine--D-glutamate ligase from Acidobacterium capsulatum (strain ATCC 51196 / DSM 11244 / BCRC 80197 / JCM 7670 / NBRC 15755 / NCIMB 13165 / 161).